The primary structure comprises 475 residues: RNA pseudouridine synthase 3, mitochondrial (475 aa).

Residues 1 to 15 (MLCRRRRVGAAVRWL) constitute a mitochondrion transit peptide. Positions 40 to 74 (RLGKPKPGPRPRQLLSLPPFPGGGDGDPLPGRKAA) are disordered. One can recognise an S4 RNA-binding domain in the interval 90 to 160 (ADVPQEVVQA…GEIKKRYETI (71 aa)). Residue Asp-230 is part of the active site.

Belongs to the pseudouridine synthase RluA family.

Its subcellular location is the mitochondrion. It carries out the reaction a uridine in RNA = a pseudouridine in RNA. In Oryza sativa subsp. japonica (Rice), this protein is RNA pseudouridine synthase 3, mitochondrial.